Reading from the N-terminus, the 99-residue chain is NADH-quinone oxidoreductase subunit K (99 aa).

The next 3 helical transmembrane spans lie at 3–23 (VTAY…GVLI), 28–48 (IVVF…LVAF), and 59–79 (IAAF…LAII).

This sequence belongs to the complex I subunit 4L family. NDH-1 is composed of 14 different subunits. Subunits NuoA, H, J, K, L, M, N constitute the membrane sector of the complex.

The protein localises to the cell membrane. The catalysed reaction is a quinone + NADH + 5 H(+)(in) = a quinol + NAD(+) + 4 H(+)(out). In terms of biological role, NDH-1 shuttles electrons from NADH, via FMN and iron-sulfur (Fe-S) centers, to quinones in the respiratory chain. The immediate electron acceptor for the enzyme in this species is believed to be a menaquinone. Couples the redox reaction to proton translocation (for every two electrons transferred, four hydrogen ions are translocated across the cytoplasmic membrane), and thus conserves the redox energy in a proton gradient. The protein is NADH-quinone oxidoreductase subunit K of Nocardioides sp. (strain ATCC BAA-499 / JS614).